A 411-amino-acid polypeptide reads, in one-letter code: Na(+)-translocating NADH-quinone reductase subunit B (411 aa).

3 consecutive transmembrane segments (helical) span residues 56-76 (IMITVWLCTFPAMFFGMYNAG), 121-141 (FLPIYLVTFAVGGFWEVLFAV), and 161-181 (ILPATIPLWQVALGITFGVVI). Residue Thr-228 is modified to FMN phosphoryl threonine. A run of 5 helical transmembrane segments spans residues 254–274 (FIPGSVGETSTLAILIGAAVL), 284–304 (IMLGVFVGMALTAMLFTAIGS), 309–329 (MFGMPWYWHLVLGGFAFGMVF), 345–365 (LLFGFLIGVMTVLIRVVNPAF), and 368–388 (GIMLAILFANLFAPMIDHFFV).

This sequence belongs to the NqrB/RnfD family. As to quaternary structure, composed of six subunits; NqrA, NqrB, NqrC, NqrD, NqrE and NqrF. FMN is required as a cofactor.

It localises to the cell inner membrane. It carries out the reaction a ubiquinone + n Na(+)(in) + NADH + H(+) = a ubiquinol + n Na(+)(out) + NAD(+). Its function is as follows. NQR complex catalyzes the reduction of ubiquinone-1 to ubiquinol by two successive reactions, coupled with the transport of Na(+) ions from the cytoplasm to the periplasm. NqrA to NqrE are probably involved in the second step, the conversion of ubisemiquinone to ubiquinol. In Chromohalobacter salexigens (strain ATCC BAA-138 / DSM 3043 / CIP 106854 / NCIMB 13768 / 1H11), this protein is Na(+)-translocating NADH-quinone reductase subunit B.